The following is a 102-amino-acid chain: Class II hydrophobin 3 (102 aa).

The N-terminal stretch at 1–16 (MQFLAVAALLFTTALA) is a signal peptide. Cystine bridges form between Cys-33–Cys-83, Cys-44–Cys-74, Cys-45–Cys-57, and Cys-84–Cys-95.

The protein belongs to the cerato-ulmin hydrophobin family. In terms of assembly, homotetramer. Further self-assembles to form highly ordered films at water-air interfaces through intermolecular interactions. In terms of tissue distribution, expressed in the conidia, vegetative growth and induction growth stages.

It is found in the secreted. The protein localises to the cell wall. Its subcellular location is the cytoplasm. Its function is as follows. Aerial growth, conidiation, and dispersal of filamentous fungi in the environment rely upon a capability of their secreting small amphipathic proteins called hydrophobins (HPBs) with low sequence identity. Class I can self-assemble into an outermost layer of rodlet bundles on aerial cell surfaces, conferring cellular hydrophobicity that supports fungal growth, development and dispersal; whereas Class II form highly ordered films at water-air interfaces through intermolecular interactions but contribute nothing to the rodlet structure. Hbf3 is a class II hydrophobin that has a role in vegetative growth and asexual development. This is Class II hydrophobin 3 from Hypocrea jecorina (strain QM6a) (Trichoderma reesei).